A 338-amino-acid chain; its full sequence is DNA-directed RNA polymerase subunit alpha (338 aa).

The alpha N-terminal domain (alpha-NTD) stretch occupies residues 1 to 226 (MLIAQRPTLT…ELFGLARELN (226 aa)). The segment at 243 to 338 (LAADLALPIE…DADYADEQYN (96 aa)) is alpha C-terminal domain (alpha-CTD).

The protein belongs to the RNA polymerase alpha chain family. Homodimer. The RNAP catalytic core consists of 2 alpha, 1 beta, 1 beta' and 1 omega subunit. When a sigma factor is associated with the core the holoenzyme is formed, which can initiate transcription.

The catalysed reaction is RNA(n) + a ribonucleoside 5'-triphosphate = RNA(n+1) + diphosphate. Functionally, DNA-dependent RNA polymerase catalyzes the transcription of DNA into RNA using the four ribonucleoside triphosphates as substrates. This is DNA-directed RNA polymerase subunit alpha from Beutenbergia cavernae (strain ATCC BAA-8 / DSM 12333 / CCUG 43141 / JCM 11478 / NBRC 16432 / NCIMB 13614 / HKI 0122).